The primary structure comprises 143 residues: Transcriptional regulator MraZ (143 aa).

2 SpoVT-AbrB domains span residues 5–47 (EFRH…PMKE) and 76–119 (ATEC…DEAR).

This sequence belongs to the MraZ family. As to quaternary structure, forms oligomers.

The protein resides in the cytoplasm. The protein localises to the nucleoid. This is Transcriptional regulator MraZ from Enterococcus hirae.